The primary structure comprises 256 residues: MKHSNKPYDSFQDELEDYIKVQKARGLEPKTCFRRMRGEYLESCGYREEFDSRPRYRMFDQRLPSGTNHSYPRSCSSSQTEDRVPQWLPAHDKIRLNSLSYCQFTRDGFSEKPVPLNLSQQEYNCGSYSVESVVHKRLCSEHSTIDPQVSHRQMHQKRKKHVEEGREKQEERPKHERKRSSEEMDLNKHRSIQRKKTKAETETVQDGTEKLKNRKEKKTRDVSSKKEDRKRRKEKKEQGEERTEEEMLWDQSILGF.

Disordered regions lie at residues 62-84 and 144-256; these read RLPS…EDRV and TIDP…ILGF. Over residues 64-79 the composition is skewed to polar residues; sequence PSGTNHSYPRSCSSSQ. Composition is skewed to basic and acidic residues over residues 161–188 and 218–227; these read HVEE…DLNK and KTRDVSSKKE. Residues 209–247 are a coiled coil; it reads EKLKNRKEKKTRDVSSKKEDRKRRKEKKEQGEERTEEEM.

The chain is Lysine-rich coiled-coil protein 1 (Krcc1) from Mus musculus (Mouse).